The sequence spans 102 residues: Small ribosomal subunit protein uS10 (102 aa).

It belongs to the universal ribosomal protein uS10 family. Part of the 30S ribosomal subunit.

In terms of biological role, involved in the binding of tRNA to the ribosomes. The chain is Small ribosomal subunit protein uS10 from Tropheryma whipplei (strain TW08/27) (Whipple's bacillus).